We begin with the raw amino-acid sequence, 41 residues long: Large ribosomal subunit protein bL36 (41 aa).

It belongs to the bacterial ribosomal protein bL36 family.

This Bartonella quintana (strain Toulouse) (Rochalimaea quintana) protein is Large ribosomal subunit protein bL36.